The primary structure comprises 386 residues: Succinyl-diaminopimelate desuccinylase (386 aa).

His73 contributes to the Zn(2+) binding site. Asp75 is a catalytic residue. Asp106 provides a ligand contact to Zn(2+). Catalysis depends on Glu140, which acts as the Proton acceptor. Zn(2+)-binding residues include Glu141, Glu169, and His355.

It belongs to the peptidase M20A family. DapE subfamily. As to quaternary structure, homodimer. Zn(2+) is required as a cofactor. It depends on Co(2+) as a cofactor.

The catalysed reaction is N-succinyl-(2S,6S)-2,6-diaminopimelate + H2O = (2S,6S)-2,6-diaminopimelate + succinate. Its pathway is amino-acid biosynthesis; L-lysine biosynthesis via DAP pathway; LL-2,6-diaminopimelate from (S)-tetrahydrodipicolinate (succinylase route): step 3/3. Its function is as follows. Catalyzes the hydrolysis of N-succinyl-L,L-diaminopimelic acid (SDAP), forming succinate and LL-2,6-diaminopimelate (DAP), an intermediate involved in the bacterial biosynthesis of lysine and meso-diaminopimelic acid, an essential component of bacterial cell walls. This chain is Succinyl-diaminopimelate desuccinylase, found in Delftia acidovorans (strain DSM 14801 / SPH-1).